Consider the following 278-residue polypeptide: 4-deoxy-L-threo-5-hexosulose-uronate ketol-isomerase (278 aa).

Zn(2+)-binding residues include His-196, His-198, Glu-203, and His-245.

The protein belongs to the KduI family. The cofactor is Zn(2+).

The enzyme catalyses 5-dehydro-4-deoxy-D-glucuronate = 3-deoxy-D-glycero-2,5-hexodiulosonate. It functions in the pathway glycan metabolism; pectin degradation; 2-dehydro-3-deoxy-D-gluconate from pectin: step 4/5. In terms of biological role, catalyzes the isomerization of 5-dehydro-4-deoxy-D-glucuronate to 3-deoxy-D-glycero-2,5-hexodiulosonate. The protein is 4-deoxy-L-threo-5-hexosulose-uronate ketol-isomerase of Salmonella agona (strain SL483).